Here is a 124-residue protein sequence, read N- to C-terminus: Small ribosomal subunit protein uS12 (124 aa).

The disordered stretch occupies residues 1–25; it reads MARINQLVRKPRRARAKKSDVPALE. Asp-89 is subject to 3-methylthioaspartic acid. The segment at 103–124 is disordered; the sequence is DTAGVSGRRRGRSKYGEKKPKE.

The protein belongs to the universal ribosomal protein uS12 family. As to quaternary structure, part of the 30S ribosomal subunit. Contacts proteins S8 and S17. May interact with IF1 in the 30S initiation complex.

Its function is as follows. With S4 and S5 plays an important role in translational accuracy. In terms of biological role, interacts with and stabilizes bases of the 16S rRNA that are involved in tRNA selection in the A site and with the mRNA backbone. Located at the interface of the 30S and 50S subunits, it traverses the body of the 30S subunit contacting proteins on the other side and probably holding the rRNA structure together. The combined cluster of proteins S8, S12 and S17 appears to hold together the shoulder and platform of the 30S subunit. This chain is Small ribosomal subunit protein uS12, found in Coxiella burnetii (strain Dugway 5J108-111).